We begin with the raw amino-acid sequence, 198 residues long: FMN-dependent NADH:quinone oxidoreductase (198 aa).

96-99 contacts FMN; the sequence is MYNF.

Belongs to the azoreductase type 1 family. As to quaternary structure, homodimer. Requires FMN as cofactor.

The catalysed reaction is 2 a quinone + NADH + H(+) = 2 a 1,4-benzosemiquinone + NAD(+). It catalyses the reaction N,N-dimethyl-1,4-phenylenediamine + anthranilate + 2 NAD(+) = 2-(4-dimethylaminophenyl)diazenylbenzoate + 2 NADH + 2 H(+). In terms of biological role, quinone reductase that provides resistance to thiol-specific stress caused by electrophilic quinones. Functionally, also exhibits azoreductase activity. Catalyzes the reductive cleavage of the azo bond in aromatic azo compounds to the corresponding amines. This is FMN-dependent NADH:quinone oxidoreductase from Burkholderia thailandensis (strain ATCC 700388 / DSM 13276 / CCUG 48851 / CIP 106301 / E264).